A 340-amino-acid polypeptide reads, in one-letter code: Protein-arginine kinase (340 aa).

Residues 14–244 (IVITTRIRLA…EQIINQENLS (231 aa)) form the Phosphagen kinase C-terminal domain. Residues 17 to 21 (TTRIR), His-81, Arg-115, 166 to 170 (RASVM), and 197 to 202 (RGLWGE) contribute to the ATP site.

The protein belongs to the ATP:guanido phosphotransferase family.

It carries out the reaction L-arginyl-[protein] + ATP = N(omega)-phospho-L-arginyl-[protein] + ADP + H(+). Its function is as follows. Catalyzes the specific phosphorylation of arginine residues in proteins. The chain is Protein-arginine kinase from Clostridium acetobutylicum (strain ATCC 824 / DSM 792 / JCM 1419 / IAM 19013 / LMG 5710 / NBRC 13948 / NRRL B-527 / VKM B-1787 / 2291 / W).